The primary structure comprises 426 residues: Serine--tRNA ligase (426 aa).

The disordered stretch occupies residues 103 to 129 (VPNLPDDSVPTGKDENDNPEIRRWGTP). Over residues 114-125 (GKDENDNPEIRR) the composition is skewed to basic and acidic residues. 230–232 (TAE) is a binding site for L-serine. An ATP-binding site is contributed by 261–263 (RSE). Residue Glu284 participates in L-serine binding. 348-351 (EISS) contacts ATP. Ser384 is an L-serine binding site.

Belongs to the class-II aminoacyl-tRNA synthetase family. Type-1 seryl-tRNA synthetase subfamily. As to quaternary structure, homodimer. The tRNA molecule binds across the dimer.

It localises to the cytoplasm. It carries out the reaction tRNA(Ser) + L-serine + ATP = L-seryl-tRNA(Ser) + AMP + diphosphate + H(+). The enzyme catalyses tRNA(Sec) + L-serine + ATP = L-seryl-tRNA(Sec) + AMP + diphosphate + H(+). It functions in the pathway aminoacyl-tRNA biosynthesis; selenocysteinyl-tRNA(Sec) biosynthesis; L-seryl-tRNA(Sec) from L-serine and tRNA(Sec): step 1/1. In terms of biological role, catalyzes the attachment of serine to tRNA(Ser). Is also able to aminoacylate tRNA(Sec) with serine, to form the misacylated tRNA L-seryl-tRNA(Sec), which will be further converted into selenocysteinyl-tRNA(Sec). The chain is Serine--tRNA ligase from Dichelobacter nodosus (strain VCS1703A).